A 132-amino-acid chain; its full sequence is Small ribosomal subunit protein uS8 (132 aa).

It belongs to the universal ribosomal protein uS8 family. Part of the 30S ribosomal subunit. Contacts proteins S5 and S12.

One of the primary rRNA binding proteins, it binds directly to 16S rRNA central domain where it helps coordinate assembly of the platform of the 30S subunit. This is Small ribosomal subunit protein uS8 from Lactobacillus delbrueckii subsp. bulgaricus (strain ATCC BAA-365 / Lb-18).